The chain runs to 517 residues: Probable bifunctional methylthioribulose-1-phosphate dehydratase/enolase-phosphatase E1 (517 aa).

Residues 1 to 242 (MACSGCSCEA…CIKLYQLGID (242 aa)) form a methylthioribulose-1-phosphate dehydratase region. Residue C114 coordinates substrate. Positions 132 and 134 each coordinate Zn(2+). E157 (proton donor/acceptor; for methylthioribulose-1-phosphate dehydratase activity) is an active-site residue. A Zn(2+)-binding site is contributed by H207. Residues 278 to 517 (VVLDIEGTTT…FRTIKSFSEI (240 aa)) are enolase-phosphatase E1. The Mg(2+) site is built by D281 and E283. Residues 416-417 (SS) and K450 contribute to the substrate site. Residue D476 coordinates Mg(2+).

This sequence in the N-terminal section; belongs to the aldolase class II family. MtnB subfamily. In the C-terminal section; belongs to the HAD-like hydrolase superfamily. MasA/MtnC family. Requires Zn(2+) as cofactor. Mg(2+) serves as cofactor.

The catalysed reaction is 5-(methylsulfanyl)-D-ribulose 1-phosphate = 5-methylsulfanyl-2,3-dioxopentyl phosphate + H2O. It catalyses the reaction 5-methylsulfanyl-2,3-dioxopentyl phosphate + H2O = 1,2-dihydroxy-5-(methylsulfanyl)pent-1-en-3-one + phosphate. It participates in amino-acid biosynthesis; L-methionine biosynthesis via salvage pathway; L-methionine from S-methyl-5-thio-alpha-D-ribose 1-phosphate: step 2/6. It functions in the pathway amino-acid biosynthesis; L-methionine biosynthesis via salvage pathway; L-methionine from S-methyl-5-thio-alpha-D-ribose 1-phosphate: step 3/6. Its pathway is amino-acid biosynthesis; L-methionine biosynthesis via salvage pathway; L-methionine from S-methyl-5-thio-alpha-D-ribose 1-phosphate: step 4/6. This chain is Probable bifunctional methylthioribulose-1-phosphate dehydratase/enolase-phosphatase E1, found in Zea mays (Maize).